The primary structure comprises 223 residues: Small ribosomal subunit protein uS3 (223 aa).

Positions 39–117 constitute a KH type-2 domain; that stretch reads IREFLRKKPS…RPELNAKLVA (79 aa).

The protein belongs to the universal ribosomal protein uS3 family. In terms of assembly, part of the 30S ribosomal subunit. Forms a tight complex with proteins S10 and S14.

Its function is as follows. Binds the lower part of the 30S subunit head. Binds mRNA in the 70S ribosome, positioning it for translation. The protein is Small ribosomal subunit protein uS3 of Chlamydia abortus (strain DSM 27085 / S26/3) (Chlamydophila abortus).